A 906-amino-acid chain; its full sequence is Inactive angiotensin-converting enzyme-related protein (906 aa).

The signal sequence occupies residues 1-19 (MKFHILLLLLVGACLPVFT). A disordered region spans residues 28–95 (LLPADEAPKD…SPTPEPEPAI (68 aa)). Residues 67–83 (PEPKPEPEPEPEPKPEP) show a composition bias toward basic and acidic residues. Residue asparagine 159 is glycosylated (N-linked (GlcNAc...) asparagine). Positions 175–765 (IKDEEKLRSW…EIDQVVVGWD (591 aa)) constitute a Peptidase M2 domain. Cysteines 289 and 297 form a disulfide. Residue asparagine 653 is glycosylated (N-linked (GlcNAc...) asparagine). A disordered region spans residues 862 to 882 (VTTPEPSAEPEPTAKTTTKMP). Positions 863-882 (TTPEPSAEPEPTAKTTTKMP) are enriched in low complexity.

This sequence belongs to the peptidase M2 family. Expressed in the hypodermis, in the vulva during organogenesis, and in the ray papillae of the male tail.

Inactive as a metallopeptidase, due to a lack of active site residues. Required for larval molting, male tail development, and formation of adult alae. Acts in the heterochronic pathway and plays a role in the developmental timing of postembryonic hypodermal seam cell division and adult alae production. Acts synergistically with apl-1 in let-7 regulated postembryonic cell division events. Might act downstream of the heterochronic protein lin-41. Negative regulator of lifespan, heat and oxidative stress response and age-related degenerative changes like reduced pharyngeal pumping and decreased body movements. Lifespan restriction is dependent on the forkhead-type transcription factor daf-16. This Caenorhabditis elegans protein is Inactive angiotensin-converting enzyme-related protein.